The following is a 431-amino-acid chain: MAPSVRARFAPSPTGDLHLGGARTALFNYLFARHHGGRLLLRIEDTDRQRSRREHEERILEDLGWLGLRFDEGPYRQSERGEVYAGYAGRLLEGGLAYEAEDASGRRAVYFRPPERGGAFRDALRGEVRFGGVRDFVILKSDGMPAYNFAAVVDDIEMEITHVIRGEEHLPNTGRQALLYRALGVPEPEFLHLGLILGPDGRKLSKRHGAQSVRGYREEGYLPEALLNYLALLGWTHPEGREEFSGLEELVAEWDPSRLGSSPARFDPQRLLYFNARHLRRLPARRLARLVEPFLEEPLPPGREEVAVEAVREELRLLSDAPRLLGRLLGPVDPGAAAGRPPGGAGEALAAASRLLESRRPEGLEEARELLAALRRWAKERGIKAREALHPLRVALTGEDRGPRLEYIIVLLGPEEAQKRIERAREARLRA.

Positions 11–21 (PSPTGDLHLGG) match the 'HIGH' region motif. A 'KMSKS' region motif is present at residues 203–207 (KLSKR). Residue K206 participates in ATP binding.

The protein belongs to the class-I aminoacyl-tRNA synthetase family. Glutamate--tRNA ligase type 1 subfamily. Monomer.

It is found in the cytoplasm. It carries out the reaction tRNA(Glu) + L-glutamate + ATP = L-glutamyl-tRNA(Glu) + AMP + diphosphate. Catalyzes the attachment of glutamate to tRNA(Glu) in a two-step reaction: glutamate is first activated by ATP to form Glu-AMP and then transferred to the acceptor end of tRNA(Glu). The sequence is that of Glutamate--tRNA ligase 1 from Rubrobacter xylanophilus (strain DSM 9941 / JCM 11954 / NBRC 16129 / PRD-1).